Reading from the N-terminus, the 529-residue chain is Type I restriction enzyme StySPI methylase subunit (529 aa).

Residues 148-153, 178-180, and Glu-216 contribute to the S-adenosyl-L-methionine site; these read QYFTPR and TAG. Positions 424–443 are disordered; that stretch reads AEESEVADSEENKNADQHQA.

It belongs to the N(4)/N(6)-methyltransferase family. In terms of assembly, the type I restriction/modification system is composed of three polypeptides R, M and S; the restriction enzyme has stoichiometry R(2)M(2)S(1) while the methyltransferase is M(2)S(1).

The enzyme catalyses a 2'-deoxyadenosine in DNA + S-adenosyl-L-methionine = an N(6)-methyl-2'-deoxyadenosine in DNA + S-adenosyl-L-homocysteine + H(+). Functionally, the subtype gamma methyltransferase (M) subunit of a type I restriction enzyme. The M and S subunits together form a methyltransferase (MTase) that methylates A-2 on the top strand and A-3 on the bottom strand of the sequence 5'-AACN(6)GTRC-3'. In the presence of the R subunit the complex can also act as an endonuclease, binding to the same target sequence but cutting the DNA some distance from this site. Whether the DNA is cut or modified depends on the methylation state of the target sequence. When the target site is unmodified, the DNA is cut. When the target site is hemimethylated, the complex acts as a maintenance MTase modifying the DNA so that both strands become methylated. After locating a non-methylated recognition site, the enzyme complex serves as a molecular motor that translocates DNA in an ATP-dependent manner until a collision occurs that triggers cleavage. The polypeptide is Type I restriction enzyme StySPI methylase subunit (Salmonella potsdam).